Consider the following 316-residue polypeptide: 4-hydroxyphenylacetate decarboxylase activating enzyme (316 aa).

The 288-residue stretch at 20-307 (HDGPGCRTTV…QDIFLDNGIA (288 aa)) folds into the Radical SAM core domain. Cys34, Cys38, Cys41, Cys60, Cys66, Cys69, and Cys105 together coordinate [4Fe-4S] cluster. Residue 40–42 (WCA) coordinates S-adenosyl-L-methionine. In terms of domain architecture, 4Fe-4S ferredoxin-type spans 84–115 (NKPVIDWNICKDCESFECVNSCYYNAFKLCAK). Residues Gly144, 193–195 (DIK), and His267 each bind S-adenosyl-L-methionine.

It belongs to the organic radical-activating enzymes family. As to quaternary structure, monomer. Requires [4Fe-4S] cluster as cofactor.

The enzyme catalyses glycyl-[protein] + reduced [flavodoxin] + S-adenosyl-L-methionine = glycin-2-yl radical-[protein] + semiquinone [flavodoxin] + 5'-deoxyadenosine + L-methionine + H(+). In terms of biological role, catalyzes activation of 4-hydroxyphenylacetate decarboxylase under anaerobic conditions by generation of an organic free radical on a glycine residue, via a homolytic cleavage of S-adenosyl-L-methionine (SAM). This chain is 4-hydroxyphenylacetate decarboxylase activating enzyme, found in Clostridioides difficile (strain 630) (Peptoclostridium difficile).